Reading from the N-terminus, the 115-residue chain is MKINTLQSLINQQITQVGHGGQAGRLTETNPLTENSHQISTAEKAFANEVLEHVKNTALSRHDIACLLPRVSNLELKQGKAGEVIVTGLRTEQLSLSDAKLLLEAAMRQDTAADG.

The interval 19-38 (HGGQAGRLTETNPLTENSHQ) is disordered. Residues 27 to 38 (TETNPLTENSHQ) are compositionally biased toward polar residues.

Belongs to an operon involved in the translocation of Yop proteins across the bacterial membranes or in the specific control of this function. In Yersinia pestis, this protein is Yop proteins translocation protein M (yscM).